Here is a 418-residue protein sequence, read N- to C-terminus: Caveolae-associated protein 2 (418 aa).

The interval 1 to 42 is disordered; that stretch reads MGEDAAQAEKFQHPNTDMLQEKPSSPSPMPSSTPSPSLNLGS. Glycine 2 carries the post-translational modification N-acetylglycine. An interaction with CAVIN1 region spans residues 2–168; sequence GEDAAQAEKF…IFQEESEIPA (167 aa). Phosphoserine occurs at positions 27, 35, 37, and 51. Coiled-coil stretches lie at residues 61–87 and 126–268; these read LLDKLVNMLDAVRENQHNMEQRQINLE and RAVR…VERR. Positions 62 to 100 are leucine-zipper; the sequence is LDKLVNMLDAVRENQHNMEQRQINLEGSVKGIQNDLTKL. Threonine 196 bears the Phosphothreonine mark. Disordered regions lie at residues 200-238 and 262-382; these read VDLSSDDELPRDEEALEDSAEEKMEESRAEKIKRSSLKK and IVSV…ALQQ. Phosphoserine occurs at positions 203, 204, and 218. A compositionally biased stretch (acidic residues) spans 203 to 219; that stretch reads SSDDELPRDEEALEDSA. Over residues 220–238 the composition is skewed to basic and acidic residues; that stretch reads EEKMEESRAEKIKRSSLKK. Residues 275-287 are compositionally biased toward polar residues; it reads LTPNHQKASSGKS. 6 positions are modified to phosphoserine: serine 283, serine 284, serine 287, serine 288, serine 293, and serine 296. The span at 303-321 shows a compositional bias: basic and acidic residues; the sequence is REGESSVENETKLEDQMQE. 4 positions are modified to phosphoserine: serine 327, serine 336, serine 359, and serine 363. The segment covering 355–366 has biased composition (polar residues); that stretch reads RGNNSAVGSNAD. Threonine 368 is modified (phosphothreonine). A compositionally biased stretch (acidic residues) spans 368–377; the sequence is TIEEDEEEEP. The residue at position 388 (tyrosine 388) is a Phosphotyrosine. A phosphoserine mark is found at serine 390 and serine 396. Residues 396 to 418 form a disordered region; that stretch reads SEEMEEPSEKQVQPAVLHVDQTA.

The protein belongs to the CAVIN family. Component of the CAVIN complex composed of CAVIN1, CAVIN2, CAVIN3 and CAVIN4. Binds to PRKCA in the presence of phosphatidylserine. Interacts with CAVIN4; this augments the transactivation of NPPA by CAVIN4. Interacts with CAVIN1. Interacts with CAV3. In terms of processing, the N-terminus is blocked. In terms of tissue distribution, heart, adipose tissue, lung and endothelial cells (at protein level). Highly expressed in kidney and expressed at lower levels in liver, spleen, thymus, stomach, intestine and uterus.

Its subcellular location is the cytoplasm. The protein resides in the cytosol. The protein localises to the membrane. It localises to the caveola. In terms of biological role, plays an important role in caveolar biogenesis and morphology. Regulates caveolae morphology by inducing membrane curvature within caveolae. Plays a role in caveola formation in a tissue-specific manner. Required for the formation of caveolae in the lung and fat endothelia but not in the heart endothelia. Negatively regulates the size or stability of CAVIN complexes in the lung endothelial cells. May play a role in targeting PRKCA to caveolae. This is Caveolae-associated protein 2 (Cavin2) from Mus musculus (Mouse).